Reading from the N-terminus, the 486-residue chain is Dipeptide and tripeptide permease B (486 aa).

Over 1 to 27 (MNKPVSIGLLQQPKPFFMIFFVELWER) the chain is Cytoplasmic. Residues 28–48 (FGYYGVQGVLTVYFVQKLGFS) form a helical membrane-spanning segment. The Periplasmic segment spans residues 49–52 (QEQA). Residues 53-73 (FITFGAFAALVFGLISIGGYV) form a helical membrane-spanning segment. The Cytoplasmic portion of the chain corresponds to 74–82 (GDHLLGTKR). The chain crosses the membrane as a helical span at residues 83–103 (TIVLGAIVLAIGYFMTGLSIL). Topologically, residues 104 to 106 (HPN) are periplasmic. The chain crosses the membrane as a helical span at residues 107 to 127 (LIFYALGTIAVGNGLFKANPA). The Cytoplasmic segment spans residues 128 to 146 (SLLSKCYPPKDPRLDGAFT). The chain crosses the membrane as a helical span at residues 147–167 (LFYMSINLGSLFSLALAPVIA). Residues 168–172 (EKFSY) lie on the Periplasmic side of the membrane. A helical membrane pass occupies residues 173–193 (AVTYNICGIGLIIALLVYIFC). The Cytoplasmic segment spans residues 194–211 (RNTVRNIGSEPDHQRINY). The chain crosses the membrane as a helical span at residues 212–232 (TNLFLVVAGSVVMVYVCAWLM). Residue H233 is a topological domain, periplasmic. A helical transmembrane segment spans residues 234-254 (NVKIANIMLITLSVIVVFIFF). The Cytoplasmic portion of the chain corresponds to 255–267 (REALKQDKIGRNK). Residues 268–288 (MFVAFILMLQAIVFFILYAQM) form a helical membrane-spanning segment. Topologically, residues 289-311 (PTSLNFFAIHNVHHQLLGFNINP) are periplasmic. A helical transmembrane segment spans residues 312–332 (VSFQALNPFWIVVASPILAVL). Residues 333–348 (YTHWGAKGKDLTMPAK) are Cytoplasmic-facing. A helical transmembrane segment spans residues 349–369 (FAVGMFLCSLGFLTAAAAGLW). Over 370–375 (FADEQG) the chain is Periplasmic. A helical membrane pass occupies residues 376–396 (LTSAWFIVLVYLFQGVGELMI). Residues 397 to 419 (SALGLAMIAALVPQYLMGFILGM) lie on the Cytoplasmic side of the membrane. Residues 420–440 (WYLTQATSSLLGGYVAALTAA) form a helical membrane-spanning segment. The Periplasmic segment spans residues 441–456 (PKGITDPLQTLPVYTS). Residues 457–477 (VFGKIGIATFIVAIIMAATVP) traverse the membrane as a helical segment. The Cytoplasmic segment spans residues 478–486 (LLNRMMQEK).

It belongs to the major facilitator superfamily. Proton-dependent oligopeptide transporter (POT/PTR) (TC 2.A.17) family. DtpB subfamily.

It is found in the cell inner membrane. In terms of biological role, proton-dependent permease that transports di- and tripeptides. In Photorhabdus luminescens (Xenorhabdus luminescens), this protein is Dipeptide and tripeptide permease B.